A 594-amino-acid chain; its full sequence is 3-hydroxy-3-methylglutaryl coenzyme A reductase 2-A (594 aa).

A disordered region spans residues 1-32 (MDVRRRPVKSLSSAKTATAGEPPKSQQQHPKA). The Lumenal segment spans residues 1 to 37 (MDVRRRPVKSLSSAKTATAGEPPKSQQQHPKASDALP). A helical membrane pass occupies residues 38 to 58 (LPLYLTNGLFFTMFFSVMYFL). The Cytoplasmic portion of the chain corresponds to 59 to 81 (LHRWREKIRNSTPLHVVTLSELA). The helical transmembrane segment at 82-102 (ALVLLMASVIYLLGFFGIGFV) threads the bilayer. Residues 103 to 549 (RSVIRPSPDA…SKESPGSNSR (447 aa)) are Lumenal-facing. Residue asparagine 261 is glycosylated (N-linked (GlcNAc...) asparagine). Glutamate 273 (charge relay system) is an active-site residue. N-linked (GlcNAc...) asparagine glycosylation occurs at asparagine 337. Residues lysine 405 and aspartate 481 each act as charge relay system in the active site. Residues 550–570 (LLASIVAGSVLAGELSLMSAL) form a helical membrane-spanning segment. At 571–594 (AAGQLVKSHMKYNRSSKDITKLSS) the chain is on the cytoplasmic side. Histidine 579 (proton donor) is an active-site residue.

Belongs to the HMG-CoA reductase family. As to expression, mostly expressed in the petioles of seedlings, seedlings and roots, and, to a lower extent, in seeds, leaves, stems and flowers.

It is found in the endoplasmic reticulum membrane. The protein resides in the plastid. The protein localises to the chloroplast membrane. Its subcellular location is the peroxisome membrane. It carries out the reaction (R)-mevalonate + 2 NADP(+) + CoA = (3S)-3-hydroxy-3-methylglutaryl-CoA + 2 NADPH + 2 H(+). The protein operates within metabolic intermediate biosynthesis; (R)-mevalonate biosynthesis; (R)-mevalonate from acetyl-CoA: step 3/3. With respect to regulation, competitive inhibition by mevinolin (Mev) is leading to a significant reduction of total ginsenoside in adventitious roots. Triggered by darkness. In terms of biological role, catalyzes the synthesis of mevalonate, the specific precursor of all isoprenoid compounds present in plants. Component of the triterpene saponins (e.g. ginsenosides or panaxosides) and phytosterols biosynthetic pathways. The sequence is that of 3-hydroxy-3-methylglutaryl coenzyme A reductase 2-A from Panax ginseng (Korean ginseng).